The sequence spans 286 residues: MYEKLIGAHVSASGGVELAPVRAHEIGANAFALFTKNQRQWAAKPLEASSIRAFKANCKKWGFGSEAILPHDSYLINLGAPEPEKLDKSRAAFVDEMLRCDQLGLTLLNFHPGSHLQQVSEEACLATIAESINLAHRQVPNVIAVIENTAGQGSNLGWRFEHLAAIIDQVEDKERVGVCLDTCHTFAAGYDLRTKAACDETFAEFERVVGMHYLRAMHINDSKGKLASRVDRHHSLGMGEIGWECFEYIAQDARFNGIPLILETIDPDIWATEIATLRKFSTQKEN.

9 residues coordinate Zn(2+): histidine 71, histidine 111, glutamate 147, aspartate 181, histidine 184, histidine 218, aspartate 231, histidine 233, and glutamate 263.

This sequence belongs to the AP endonuclease 2 family. It depends on Zn(2+) as a cofactor.

The enzyme catalyses Endonucleolytic cleavage to 5'-phosphooligonucleotide end-products.. In terms of biological role, endonuclease IV plays a role in DNA repair. It cleaves phosphodiester bonds at apurinic or apyrimidinic (AP) sites, generating a 3'-hydroxyl group and a 5'-terminal sugar phosphate. In Vibrio cholerae serotype O1 (strain ATCC 39541 / Classical Ogawa 395 / O395), this protein is Probable endonuclease 4.